The sequence spans 95 residues: Large ribosomal subunit protein uL23 (95 aa).

Belongs to the universal ribosomal protein uL23 family. As to quaternary structure, part of the 50S ribosomal subunit. Contacts protein L29, and trigger factor when it is bound to the ribosome.

Its function is as follows. One of the early assembly proteins it binds 23S rRNA. One of the proteins that surrounds the polypeptide exit tunnel on the outside of the ribosome. Forms the main docking site for trigger factor binding to the ribosome. The chain is Large ribosomal subunit protein uL23 from Pediococcus pentosaceus (strain ATCC 25745 / CCUG 21536 / LMG 10740 / 183-1w).